A 418-amino-acid chain; its full sequence is Ankyrin repeat domain-containing protein 61 (418 aa).

ANK repeat units lie at residues 27–57 (ALHSKLYEAIMREDCTTIEVLLRNHPVNQPI), 75–104 (ESIIPIHLAAKYHKAQSLLCLLRHGADPEV), 132–161 (NRTHRILTDIQNSSITCLRILCAHGAQVNT), 167–196 (NKRSPLHLAIAYGCYPVLSILTQNGADVNA), 200–229 (ASMTPLHMAANMLNKEMMETLIAYGANVNC), 234–273 (TGNTPLKLAVCTASSKAGRLLGAGVSCIRLLLTHGAKVNA), 277–306 (KGQTAIHEACFGGREAIINLLLEFEANVNI), and 310–343 (NGESPIYMYLQRSCNVRDTALLARLLYHTYPLRM).

The sequence is that of Ankyrin repeat domain-containing protein 61 (ANKRD61) from Homo sapiens (Human).